A 564-amino-acid polypeptide reads, in one-letter code: Glutamate--tRNA ligase (564 aa).

The 'HIGH' region signature appears at 107–117 (PNPNGPPTLGS).

The protein belongs to the class-I aminoacyl-tRNA synthetase family. Glutamate--tRNA ligase type 2 subfamily.

Its subcellular location is the cytoplasm. The catalysed reaction is tRNA(Glu) + L-glutamate + ATP = L-glutamyl-tRNA(Glu) + AMP + diphosphate. Catalyzes the attachment of glutamate to tRNA(Glu) in a two-step reaction: glutamate is first activated by ATP to form Glu-AMP and then transferred to the acceptor end of tRNA(Glu). This chain is Glutamate--tRNA ligase, found in Methanothrix thermoacetophila (strain DSM 6194 / JCM 14653 / NBRC 101360 / PT) (Methanosaeta thermophila).